A 339-amino-acid polypeptide reads, in one-letter code: MAAAVAAAPGALGSLHAGGARLVAACSAWLCPGLRLPGSLAGRRAGPAIWAQGWVPAAGGPAPKRGYSSEMKTEDELRVRHLEEENRGIVVLGINRAYGKNSLSKNLIKMLSKAVDALKSDKKVRTIIIRSEVPGIFCAGADLKERAKMSSSEVGPFVSKIRAVINDIANLPVPTIAAIDGLALGGGLELALACDIRVAASSAKMGLVETKLAIIPGGGGTQRLPRAIGMSLAKELIFSARVLDGKEAKAVGLISHVLEQNQEGDAAYRKALDLAREFLPQGPVAMRVAKLAINQGMEVDLVTGLAIEEACYAQTIPTKDRLEGLLAFKEKRPPRYKGE.

Residues 1 to 67 constitute a mitochondrion transit peptide; sequence MAAAVAAAPG…AGGPAPKRGY (67 aa). Lys-100 carries the post-translational modification N6-acetyllysine; alternate. Lys-100 carries the post-translational modification N6-succinyllysine; alternate. The segment at 105–119 is RNA-binding; the sequence is KNLIKMLSKAVDALK. Lys-109 carries the post-translational modification N6-succinyllysine. N6-acetyllysine; alternate occurs at positions 113 and 144. Lys-113 and Lys-144 each carry N6-succinyllysine; alternate. N6-succinyllysine occurs at positions 148 and 160. N6-acetyllysine; alternate occurs at positions 204 and 211. An N6-succinyllysine; alternate mark is found at Lys-204 and Lys-211. Position 329 is an N6-succinyllysine (Lys-329).

The protein belongs to the enoyl-CoA hydratase/isomerase family. As to quaternary structure, homohexamer.

The protein resides in the mitochondrion. It catalyses the reaction (3S)-3-hydroxy-3-methylglutaryl-CoA = 3-methyl-(2E)-glutaconyl-CoA + H2O. It carries out the reaction (3S)-citramalyl-CoA = itaconyl-CoA + H2O. The enzyme catalyses 3-hydroxyisovaleryl-CoA = 3-methylbut-2-enoyl-CoA + H2O. The catalysed reaction is (S)-3-hydroxyglutaryl-CoA = (2E)-glutaconyl-CoA + H2O. Its pathway is amino-acid degradation; L-leucine degradation; (S)-3-hydroxy-3-methylglutaryl-CoA from 3-isovaleryl-CoA: step 3/3. In terms of biological role, catalyzes the fifth step in the leucine degradation pathway, the reversible hydration of 3-methylglutaconyl-CoA (3-MG-CoA) to 3-hydroxy-3-methylglutaryl-CoA (HMG-CoA). Can catalyze the reverse reaction but at a much lower rate in vitro. HMG-CoA is then quickly degraded by another enzyme (such as HMG-CoA lyase) to give acetyl-CoA and acetoacetate. Uses other substrates such as (2E)-glutaconyl-CoA efficiently in vitro, and to a lesser extent 3-methylcrotonyl-CoA (3-methyl-(2E)-butenoyl-CoA), crotonyl-CoA ((2E)-butenoyl-CoA) and 3-hydroxybutanoyl-CoA (the missing carboxylate reduces affinity to the active site). Originally it was identified as an RNA-binding protein as it binds to AU-rich elements (AREs) in vitro. AREs direct rapid RNA degradation and mRNA deadenylation. Might have itaconyl-CoA hydratase activity, converting itaconyl-CoA into citramalyl-CoA in the C5-dicarboxylate catabolism pathway. The C5-dicarboxylate catabolism pathway is required to detoxify itaconate, an antimicrobial metabolite and immunomodulator produced by macrophages during certain infections, that can act as a vitamin B12-poisoning metabolite. In Homo sapiens (Human), this protein is Methylglutaconyl-CoA hydratase, mitochondrial (AUH).